Reading from the N-terminus, the 579-residue chain is Glucose starvation modulator protein 1 (579 aa).

A DNA-binding region (zn(2)-C6 fungal-type) is located at residues 20–48; it reads CVFCHEKHLQCDLGRPCQNCSKRGIGDTC. Over residues 43–53 the composition is skewed to basic and acidic residues; the sequence is GIGDTCRDKER. 2 disordered regions span residues 43–75 and 319–342; these read GIGDTCRDKERKPRKRGPRKVKKEREVSASTKS and QMASESKRHSANDTSPESQGGETV. A compositionally biased stretch (basic residues) spans 54–64; the sequence is KPRKRGPRKVK. Over residues 330 to 339 the composition is skewed to polar residues; it reads NDTSPESQGG. One can recognise a PAS domain in the interval 444 to 516; that stretch reads LLEYESMAKL…DIFHEYLAFG (73 aa).

The protein belongs to the ERT1/acuK family.

Its subcellular location is the nucleus. In terms of biological role, transcription factor which regulates nonfermentable carbon utilization. This Kluyveromyces lactis (strain ATCC 8585 / CBS 2359 / DSM 70799 / NBRC 1267 / NRRL Y-1140 / WM37) (Yeast) protein is Glucose starvation modulator protein 1 (GSM1).